We begin with the raw amino-acid sequence, 82 residues long: Sec-independent protein translocase protein TatA (82 aa).

A helical membrane pass occupies residues 1-21 (MGSFSIWHWLIVLLIVVMVFG). The tract at residues 46–82 (GASTDDSATTSAPAGQVTNNSAAADKTTIDVEAKHKS) is disordered. The segment covering 49-67 (TDDSATTSAPAGQVTNNSA) has biased composition (polar residues). The segment covering 72-82 (TTIDVEAKHKS) has biased composition (basic and acidic residues).

Belongs to the TatA/E family. In terms of assembly, the Tat system comprises two distinct complexes: a TatABC complex, containing multiple copies of TatA, TatB and TatC subunits, and a separate TatA complex, containing only TatA subunits. Substrates initially bind to the TatABC complex, which probably triggers association of the separate TatA complex to form the active translocon.

The protein resides in the cell inner membrane. Part of the twin-arginine translocation (Tat) system that transports large folded proteins containing a characteristic twin-arginine motif in their signal peptide across membranes. TatA could form the protein-conducting channel of the Tat system. The protein is Sec-independent protein translocase protein TatA of Acidovorax ebreus (strain TPSY) (Diaphorobacter sp. (strain TPSY)).